Consider the following 144-residue polypeptide: Large ribosomal subunit protein uL16 (144 aa).

The span at 1–16 shows a compositional bias: basic residues; it reads MLVPKRVKHRKVQRGK. The tract at residues 1–20 is disordered; it reads MLVPKRVKHRKVQRGKMRGE.

It belongs to the universal ribosomal protein uL16 family. As to quaternary structure, part of the 50S ribosomal subunit.

Its function is as follows. Binds 23S rRNA and is also seen to make contacts with the A and possibly P site tRNAs. In Limosilactobacillus fermentum (strain NBRC 3956 / LMG 18251) (Lactobacillus fermentum), this protein is Large ribosomal subunit protein uL16.